The chain runs to 884 residues: Probable leucine--tRNA ligase, cytoplasmic (884 aa).

The short motif at 40-50 is the 'HIGH' region element; the sequence is PYMNGKLHLGH. The 'KMSKS' region signature appears at 566–570; sequence KMSKS. ATP is bound at residue K569.

Belongs to the class-I aminoacyl-tRNA synthetase family.

It localises to the cytoplasm. The catalysed reaction is tRNA(Leu) + L-leucine + ATP = L-leucyl-tRNA(Leu) + AMP + diphosphate. This Vairimorpha ceranae (strain BRL01) (Microsporidian parasite) protein is Probable leucine--tRNA ligase, cytoplasmic.